Here is a 160-residue protein sequence, read N- to C-terminus: SsrA-binding protein (160 aa).

The protein belongs to the SmpB family.

Its subcellular location is the cytoplasm. Required for rescue of stalled ribosomes mediated by trans-translation. Binds to transfer-messenger RNA (tmRNA), required for stable association of tmRNA with ribosomes. tmRNA and SmpB together mimic tRNA shape, replacing the anticodon stem-loop with SmpB. tmRNA is encoded by the ssrA gene; the 2 termini fold to resemble tRNA(Ala) and it encodes a 'tag peptide', a short internal open reading frame. During trans-translation Ala-aminoacylated tmRNA acts like a tRNA, entering the A-site of stalled ribosomes, displacing the stalled mRNA. The ribosome then switches to translate the ORF on the tmRNA; the nascent peptide is terminated with the 'tag peptide' encoded by the tmRNA and targeted for degradation. The ribosome is freed to recommence translation, which seems to be the essential function of trans-translation. The chain is SsrA-binding protein from Salmonella arizonae (strain ATCC BAA-731 / CDC346-86 / RSK2980).